The primary structure comprises 332 residues: Probable cation efflux system protein MT2084 (332 aa).

5 consecutive transmembrane segments (helical) span residues 46–66 (ISLL…VMSG), 75–95 (IHNF…ALGA), 113–133 (AGSF…YEAI), 145–165 (VGWV…VALY), and 202–222 (VALG…AAIL).

It belongs to the cation diffusion facilitator (CDF) transporter (TC 2.A.4) family.

Its subcellular location is the cell membrane. In Mycobacterium tuberculosis (strain CDC 1551 / Oshkosh), this protein is Probable cation efflux system protein MT2084.